A 505-amino-acid polypeptide reads, in one-letter code: MPHLGPLRRRAWAALLGQLLRPPSTVCTRGCHSQVAKAVLTSEQLKSHQEKPNFVIKVPKGTRDLSPQQMVVREKILDKIISCFKRHGAKGLDTPAFELKEMLTEKYEDNFGLMYDLKDQGGELLSLRYDLTVPFARYLAMNKLKKMKRYQVGKVWRRESPAIAQGRYREFCQCDFDIAGEFDPMIPDAECLRIMCEILSGLQLGDFLIKVNDRRVVDGIFAVCGVPESKLRTICSSMDKLDKMSWEGVRHEMVAKKGLAPEVADRIGDFVQYHGGISLVEDLFKDPRLSQSQLALQGLGDLKLLFEYLRLFGIADKISLDLSLARGLDYYTGVIYEAVLLESPAQAGKETLSVGSVAAGGRYDNLVAQFDPKGHHVPCVGLSIGVERIFYLVEQKMKMSGEKVRTTETQVFVATPQKNFLQERLKIIAELWDAGIKAEMLYKNNPKLLTQLHYCEKADIPLMVIIGEQERNEGVIKLRSVASREEVTINRESLVAEIQKRLSES.

Residues Met-1–Cys-31 constitute a mitochondrion transit peptide. Ser-66 is subject to Phosphoserine. L-histidine-binding positions include Asp-130 to Thr-132, Arg-157, Gln-173, Asp-177, Arg-326, and Tyr-330 to Tyr-331. Lys-443 is modified (N6-acetyllysine).

This sequence belongs to the class-II aminoacyl-tRNA synthetase family. Homodimer.

It localises to the mitochondrion. It carries out the reaction tRNA(His) + L-histidine + ATP = L-histidyl-tRNA(His) + AMP + diphosphate + H(+). Its function is as follows. Mitochondrial aminoacyl-tRNA synthetase that catalyzes the ATP-dependent ligation of histidine to the 3'-end of its cognate tRNA, via the formation of an aminoacyl-adenylate intermediate (His-AMP). This is Histidine--tRNA ligase, mitochondrial (Hars2) from Mus musculus (Mouse).